A 77-amino-acid chain; its full sequence is MESINFEETLKKLEDVVHKLEVEELSLDDSLKIFEEGIGLYRQCSNELNKIEKKISIIIEENEEFKKVPFPHDEEES.

It belongs to the XseB family. As to quaternary structure, heterooligomer composed of large and small subunits.

The protein resides in the cytoplasm. The catalysed reaction is Exonucleolytic cleavage in either 5'- to 3'- or 3'- to 5'-direction to yield nucleoside 5'-phosphates.. Functionally, bidirectionally degrades single-stranded DNA into large acid-insoluble oligonucleotides, which are then degraded further into small acid-soluble oligonucleotides. This chain is Exodeoxyribonuclease 7 small subunit, found in Alkaliphilus oremlandii (strain OhILAs) (Clostridium oremlandii (strain OhILAs)).